A 371-amino-acid chain; its full sequence is MSL complex subunit 3B (371 aa).

Disordered stretches follow at residues 1–47 (MATL…DERA) and 160–230 (EERA…PQAK). Residues 8–47 (PKDDGEGKDEGGSDRGDGDSKPKGKKEVEPHTRREADERA) show a composition bias toward basic and acidic residues. Residues 44–367 (DERAMRIPIP…CEAHYSSKNP (324 aa)) form the MRG domain. Low complexity predominate over residues 183–193 (SESQAVAGPAA). Residues 206-216 (APRRSTRHSTH) are compositionally biased toward basic residues.

It is found in the nucleus. Its function is as follows. Probable non-catalytic component of the MSL histone acetyltransferase complex, a multiprotein complex that mediates the majority of histone H4 acetylation at 'Lys-16' (H4K16ac), an epigenetic mark that prevents chromatin compaction. The sequence is that of MSL complex subunit 3B from Mus musculus (Mouse).